A 574-amino-acid polypeptide reads, in one-letter code: Sulfate adenylyltransferase (574 aa).

The segment at 1–170 (MANAPHGGVL…VQAVSKPAYY (170 aa)) is N-terminal. Residues 171-395 (DYVALRYTPA…LRESYPPKAK (225 aa)) are catalytic. Glutamine 198 contacts sulfate. ATP contacts are provided by residues 198–201 (QTRN) and 292–295 (GRDH). Active-site residues include threonine 199, arginine 200, and asparagine 201. Arginine 200 contributes to the sulfate binding site. Alanine 296 serves as a coordination point for sulfate. Residue methionine 334 coordinates ATP. Residues 396–574 (QGFTLFLTGL…ILLLEAQSLI (179 aa)) form an allosteric regulation domain; adenylyl-sulfate kinase-like region. 3'-phosphoadenylyl sulfate contacts are provided by residues 435 to 438 (ETVR), arginine 452, 478 to 479 (IA), and lysine 519.

It in the N-terminal section; belongs to the sulfate adenylyltransferase family. This sequence in the C-terminal section; belongs to the APS kinase family. As to quaternary structure, homohexamer. Dimer of trimers.

Its subcellular location is the cytoplasm. The catalysed reaction is sulfate + ATP + H(+) = adenosine 5'-phosphosulfate + diphosphate. It participates in sulfur metabolism; hydrogen sulfide biosynthesis; sulfite from sulfate: step 1/3. With respect to regulation, allosterically inhibited by 3'-phosphoadenosine 5'-phosphosulfate (PAPS). Its function is as follows. Catalyzes the first intracellular reaction of sulfate assimilation, forming adenosine-5'-phosphosulfate (APS) from inorganic sulfate and ATP. Plays an important role in sulfate activation as a component of the biosynthesis pathway of sulfur-containing amino acids. This chain is Sulfate adenylyltransferase, found in Mycosarcoma maydis (Corn smut fungus).